The sequence spans 644 residues: Probable potassium transport system protein Kup 2 (644 aa).

The disordered stretch occupies residues 1–21 (MSSDAAAVADRDGSSPGHGGH). Transmembrane regions (helical) follow at residues 26-46 (LGAM…TSPL), 69-89 (VLSL…VAII), 120-140 (IILL…ITPA), 155-175 (AGFA…LFMI), 183-203 (VGML…VLGT), 231-251 (LAFL…ALYA), 265-285 (WLVF…AMIL), 312-332 (LVIL…TGAF), 360-380 (IYIP…VMSF), 390-410 (YGIA…VVLI), 419-439 (LAAP…GANL), and 444-464 (DGGW…TTWG).

Belongs to the HAK/KUP transporter (TC 2.A.72) family.

It localises to the cell inner membrane. It catalyses the reaction K(+)(in) + H(+)(in) = K(+)(out) + H(+)(out). Functionally, transport of potassium into the cell. Likely operates as a K(+):H(+) symporter. The protein is Probable potassium transport system protein Kup 2 of Rhizorhabdus wittichii (strain DSM 6014 / CCUG 31198 / JCM 15750 / NBRC 105917 / EY 4224 / RW1) (Sphingomonas wittichii).